The sequence spans 802 residues: Probable inactive leucine-rich repeat receptor-like protein kinase At3g03770 (802 aa).

The first 26 residues, 1–26 (MEKLYCGMPLLLLVLLLASIDGSTQL), serve as a signal peptide directing secretion. The Extracellular portion of the chain corresponds to 27–391 (QSSQSQTLLR…RNKVSKVGIA (365 aa)). Asn-52 and Asn-83 each carry an N-linked (GlcNAc...) asparagine glycan. LRR repeat units follow at residues 71-94 (EDSVTQLHIIGDNGTHMLPKSFSI), 104-128 (LPDVKVLTFVSLGLWGWLPQKINRL), 129-152 (SSLEILNVSSNFLFGPIPHELSSL), 153-176 (ATLQTLILDENMFSGELPDWIDSL), 177-200 (PSLAVLSLRKNVLNGSLPSSLSSL), 201-225 (SGLRVLALANNRFNGALPDLSHLTN), 227-244 (QVLDLEGNSFGPLFPRLS), 245-268 (NKLVTLILSKNKFRSAVSAEEVSS), 269-293 (LYQLQHLDLSYNTFVGPFPTSLMSL), 294-317 (PAITYLNISHNKLTGRLSANLSCN), and 319-341 (QLMFVDMSSNLLTGSLPTCLKPS). Asn-135 carries N-linked (GlcNAc...) asparagine glycosylation. N-linked (GlcNAc...) asparagine glycosylation occurs at Asn-190. 2 N-linked (GlcNAc...) asparagine glycosylation sites follow: Asn-300 and Asn-313. A helical membrane pass occupies residues 392–412 (LGVTASILGVLLLAGALFVVL). Residues 413–802 (RRLNAKKTVT…RDSGCEEHER (390 aa)) are Cytoplasmic-facing. In terms of domain architecture, Protein kinase spans 477–759 (FESSAFMGEG…FASQVQEGWL (283 aa)). Positions 761–802 (NSNPSSNLGSPSPAASSLPPPSRLHVTTLESPRDSGCEEHER) are disordered. Residues 762–777 (SNPSSNLGSPSPAASS) show a composition bias toward low complexity. Residues 791–802 (SPRDSGCEEHER) are compositionally biased toward basic and acidic residues.

Belongs to the protein kinase superfamily. Ser/Thr protein kinase family.

It localises to the cell membrane. This Arabidopsis thaliana (Mouse-ear cress) protein is Probable inactive leucine-rich repeat receptor-like protein kinase At3g03770.